Reading from the N-terminus, the 478-residue chain is Bifunctional protein HldE (478 aa).

Residues 1-318 are ribokinase; the sequence is MKITLPDFTR…ENAIHARPES (318 aa). Position 195 to 198 (195 to 198) interacts with ATP; it reads NLSE. The active site involves aspartate 264. The interval 344 to 478 is cytidylyltransferase; the sequence is MTNGVFDILH…KTIISGSGKN (135 aa).

This sequence in the N-terminal section; belongs to the carbohydrate kinase PfkB family. In the C-terminal section; belongs to the cytidylyltransferase family. Homodimer.

It carries out the reaction D-glycero-beta-D-manno-heptose 7-phosphate + ATP = D-glycero-beta-D-manno-heptose 1,7-bisphosphate + ADP + H(+). It catalyses the reaction D-glycero-beta-D-manno-heptose 1-phosphate + ATP + H(+) = ADP-D-glycero-beta-D-manno-heptose + diphosphate. It functions in the pathway nucleotide-sugar biosynthesis; ADP-L-glycero-beta-D-manno-heptose biosynthesis; ADP-L-glycero-beta-D-manno-heptose from D-glycero-beta-D-manno-heptose 7-phosphate: step 1/4. The protein operates within nucleotide-sugar biosynthesis; ADP-L-glycero-beta-D-manno-heptose biosynthesis; ADP-L-glycero-beta-D-manno-heptose from D-glycero-beta-D-manno-heptose 7-phosphate: step 3/4. Functionally, catalyzes the phosphorylation of D-glycero-D-manno-heptose 7-phosphate at the C-1 position to selectively form D-glycero-beta-D-manno-heptose-1,7-bisphosphate. Its function is as follows. Catalyzes the ADP transfer from ATP to D-glycero-beta-D-manno-heptose 1-phosphate, yielding ADP-D-glycero-beta-D-manno-heptose. This chain is Bifunctional protein HldE, found in Erwinia tasmaniensis (strain DSM 17950 / CFBP 7177 / CIP 109463 / NCPPB 4357 / Et1/99).